The primary structure comprises 186 residues: ATP synthase subunit delta (186 aa).

The protein belongs to the ATPase delta chain family. F-type ATPases have 2 components, F(1) - the catalytic core - and F(0) - the membrane proton channel. F(1) has five subunits: alpha(3), beta(3), gamma(1), delta(1), epsilon(1). F(0) has three main subunits: a(1), b(2) and c(10-14). The alpha and beta chains form an alternating ring which encloses part of the gamma chain. F(1) is attached to F(0) by a central stalk formed by the gamma and epsilon chains, while a peripheral stalk is formed by the delta and b chains.

The protein localises to the cell inner membrane. Functionally, f(1)F(0) ATP synthase produces ATP from ADP in the presence of a proton or sodium gradient. F-type ATPases consist of two structural domains, F(1) containing the extramembraneous catalytic core and F(0) containing the membrane proton channel, linked together by a central stalk and a peripheral stalk. During catalysis, ATP synthesis in the catalytic domain of F(1) is coupled via a rotary mechanism of the central stalk subunits to proton translocation. Its function is as follows. This protein is part of the stalk that links CF(0) to CF(1). It either transmits conformational changes from CF(0) to CF(1) or is implicated in proton conduction. The polypeptide is ATP synthase subunit delta (Brucella canis (strain ATCC 23365 / NCTC 10854 / RM-666)).